Here is a 317-residue protein sequence, read N- to C-terminus: Ribosomal protein L11 methyltransferase (317 aa).

S-adenosyl-L-methionine-binding residues include Thr-158, Gly-179, Asp-201, and Asn-244.

It belongs to the methyltransferase superfamily. PrmA family.

It is found in the cytoplasm. The catalysed reaction is L-lysyl-[protein] + 3 S-adenosyl-L-methionine = N(6),N(6),N(6)-trimethyl-L-lysyl-[protein] + 3 S-adenosyl-L-homocysteine + 3 H(+). Methylates ribosomal protein L11. This is Ribosomal protein L11 methyltransferase from Lactococcus lactis subsp. cremoris (strain MG1363).